The chain runs to 443 residues: dTDP-4-dehydro-6-deoxy-alpha-D-glucopyranose 2,3-dehydratase (443 aa).

Residues tryptophan 35, 118–122, serine 157, tryptophan 260, arginine 325, 341–343, 346–347, and 377–380 each bind dTDP-4-dehydro-6-deoxy-alpha-D-glucose; these read TFSNY, QCN, NL, and EGGR.

The protein belongs to the hexose 2,3-dehydratase family. Homodimer.

It catalyses the reaction dTDP-4-dehydro-6-deoxy-alpha-D-glucose = dTDP-3,4-didehydro-2,6-dideoxy-alpha-D-glucose + H2O. Its pathway is antibiotic biosynthesis; granaticin biosynthesis. Functionally, involved in the biosynthesis of the 2,6-deoxysugar, dTDP-L-rhodinose, attached to the benzoisochromane quinone chromophore to produce the aglycone antibiotics granaticin and granaticin B. Catalyzes the removal of the hydroxyl group at position C-2 of the hexose ring of dTDP-4-dehydro-6-deoxy-alpha-D-glucopyranose, and the oxidation of the hydroxyl group at position C-3 to form a carbonyl functionality. The product of the reaction, dTDP-2,6-dideoxy-D-glycero-hex-2-enos-4-ulose, is a highly unstable diketosugar, which spontaneously forms dTDP-3,4-didehydro-2,6-dideoxy-alpha-D-glucose. The chain is dTDP-4-dehydro-6-deoxy-alpha-D-glucopyranose 2,3-dehydratase from Streptomyces violaceoruber.